We begin with the raw amino-acid sequence, 503 residues long: Cytochrome P450 3A13 (503 aa).

Cys442 lines the heme pocket.

This sequence belongs to the cytochrome P450 family. Requires heme as cofactor.

The protein localises to the endoplasmic reticulum membrane. It is found in the microsome membrane. The catalysed reaction is an organic molecule + reduced [NADPH--hemoprotein reductase] + O2 = an alcohol + oxidized [NADPH--hemoprotein reductase] + H2O + H(+). Can activate aflatoxin B1 to a genotoxic product. In Mus musculus (Mouse), this protein is Cytochrome P450 3A13 (Cyp3a13).